Reading from the N-terminus, the 450-residue chain is tRNA modification GTPase MnmE (450 aa).

3 residues coordinate (6S)-5-formyl-5,6,7,8-tetrahydrofolate: Arg-23, Glu-79, and Lys-118. The region spanning 214–374 is the TrmE-type G domain; that stretch reads GITLILVGKP…LKEHILNKVG (161 aa). Position 224 (Asn-224) interacts with K(+). GTP is bound by residues 224 to 229, 243 to 249, and 268 to 271; these read NAGKSS, TSIAGTT, and DTAG. Ser-228 lines the Mg(2+) pocket. 3 residues coordinate K(+): Thr-243, Ile-245, and Thr-248. Thr-249 is a Mg(2+) binding site. Lys-450 serves as a coordination point for (6S)-5-formyl-5,6,7,8-tetrahydrofolate.

The protein belongs to the TRAFAC class TrmE-Era-EngA-EngB-Septin-like GTPase superfamily. TrmE GTPase family. As to quaternary structure, homodimer. Heterotetramer of two MnmE and two MnmG subunits. Requires K(+) as cofactor.

Its subcellular location is the cytoplasm. In terms of biological role, exhibits a very high intrinsic GTPase hydrolysis rate. Involved in the addition of a carboxymethylaminomethyl (cmnm) group at the wobble position (U34) of certain tRNAs, forming tRNA-cmnm(5)s(2)U34. This is tRNA modification GTPase MnmE from Francisella tularensis subsp. tularensis (strain WY96-3418).